A 527-amino-acid chain; its full sequence is EGF domain-specific O-linked N-acetylglucosamine transferase (527 aa).

A signal peptide spans 1–19; that stretch reads MLMLLVFGVLLHEVPLSGQ. Residues 295 to 297 carry the Required for optimal activity motif; that stretch reads DYD. A glycan (N-linked (GlcNAc...) asparagine) is linked at Asn354. Residues 524-527 carry the Prevents secretion from ER motif; that stretch reads HDEL.

The protein belongs to the glycosyltransferase 61 family. As to expression, widely expressed. Expressed in brain, heart, kidney, lung, skeletal muscles and thymus. Highest expression is observed in lung and the lowest in skeletal muscles.

It is found in the endoplasmic reticulum lumen. The catalysed reaction is L-seryl-[protein] + UDP-N-acetyl-alpha-D-glucosamine = 3-O-(N-acetyl-beta-D-glucosaminyl)-L-seryl-[protein] + UDP + H(+). It carries out the reaction L-threonyl-[protein] + UDP-N-acetyl-alpha-D-glucosamine = 3-O-(N-acetyl-beta-D-glucosaminyl)-L-threonyl-[protein] + UDP + H(+). Its function is as follows. Catalyzes the transfer of a single N-acetylglucosamine from UDP-GlcNAc to a serine or threonine residue in extracellular proteins resulting in their modification with a beta-linked N-acetylglucosamine (O-GlcNAc). Specifically glycosylates the Thr residue located between the fifth and sixth conserved cysteines of folded EGF-like domains. The polypeptide is EGF domain-specific O-linked N-acetylglucosamine transferase (Eogt) (Mus musculus (Mouse)).